Reading from the N-terminus, the 345-residue chain is Putative F-box protein At3g17265 (345 aa).

The F-box domain occupies 1–46 (MMFAYLPPDLESEILSRVPATFLKELQTTCKRWYALFRDPIFVKKN).

The polypeptide is Putative F-box protein At3g17265 (Arabidopsis thaliana (Mouse-ear cress)).